The chain runs to 315 residues: Ribosomal RNA small subunit methyltransferase H (315 aa).

S-adenosyl-L-methionine-binding positions include G32–H34, D52, F78, D100, and Q107.

It belongs to the methyltransferase superfamily. RsmH family.

It is found in the cytoplasm. It carries out the reaction cytidine(1402) in 16S rRNA + S-adenosyl-L-methionine = N(4)-methylcytidine(1402) in 16S rRNA + S-adenosyl-L-homocysteine + H(+). Its function is as follows. Specifically methylates the N4 position of cytidine in position 1402 (C1402) of 16S rRNA. The chain is Ribosomal RNA small subunit methyltransferase H from Psychromonas ingrahamii (strain DSM 17664 / CCUG 51855 / 37).